The chain runs to 623 residues: MAU2 chromatid cohesion factor homolog (623 aa).

TPR repeat units lie at residues 96-129 (FDTA…SQNN), 451-484 (GGFY…ANAE), and 491-524 (SCSL…ASKI).

The protein belongs to the SCC4/mau-2 family. As to quaternary structure, interacts with Nipped-B to form the cohesin loading complex.

It is found in the nucleus. The protein localises to the nucleoplasm. Its function is as follows. Required for association of the cohesin complex with chromatin during interphase. Plays a role in sister chromatid cohesion and normal progression through prometaphase. The protein is MAU2 chromatid cohesion factor homolog of Drosophila grimshawi (Hawaiian fruit fly).